Here is a 225-residue protein sequence, read N- to C-terminus: Cytochrome c oxidase subunit 2 (225 aa).

Residues 1–25 (MSTWFMFMFQESNSYYADNLISFHN) lie on the Mitochondrial intermembrane side of the membrane. Residues 26-47 (MVMMIIIMISTLTVYIILDLFM) traverse the membrane as a helical segment. Topologically, residues 48 to 62 (NKFSNLFLLKNHNIE) are mitochondrial matrix. A helical transmembrane segment spans residues 63–82 (IIWTIIPIIILLIICFPSLK). Residues 83–225 (ILYLIDEIVN…YFLNWVNKQI (143 aa)) lie on the Mitochondrial intermembrane side of the membrane. The Cu cation site is built by H159, C194, E196, C198, H202, and M205. Position 196 (E196) interacts with Mg(2+).

It belongs to the cytochrome c oxidase subunit 2 family. As to quaternary structure, component of the cytochrome c oxidase (complex IV, CIV), a multisubunit enzyme composed of a catalytic core of 3 subunits and several supernumerary subunits. The complex exists as a monomer or a dimer and forms supercomplexes (SCs) in the inner mitochondrial membrane with ubiquinol-cytochrome c oxidoreductase (cytochrome b-c1 complex, complex III, CIII). Cu cation serves as cofactor.

The protein localises to the mitochondrion inner membrane. The enzyme catalyses 4 Fe(II)-[cytochrome c] + O2 + 8 H(+)(in) = 4 Fe(III)-[cytochrome c] + 2 H2O + 4 H(+)(out). Functionally, component of the cytochrome c oxidase, the last enzyme in the mitochondrial electron transport chain which drives oxidative phosphorylation. The respiratory chain contains 3 multisubunit complexes succinate dehydrogenase (complex II, CII), ubiquinol-cytochrome c oxidoreductase (cytochrome b-c1 complex, complex III, CIII) and cytochrome c oxidase (complex IV, CIV), that cooperate to transfer electrons derived from NADH and succinate to molecular oxygen, creating an electrochemical gradient over the inner membrane that drives transmembrane transport and the ATP synthase. Cytochrome c oxidase is the component of the respiratory chain that catalyzes the reduction of oxygen to water. Electrons originating from reduced cytochrome c in the intermembrane space (IMS) are transferred via the dinuclear copper A center (CU(A)) of subunit 2 and heme A of subunit 1 to the active site in subunit 1, a binuclear center (BNC) formed by heme A3 and copper B (CU(B)). The BNC reduces molecular oxygen to 2 water molecules using 4 electrons from cytochrome c in the IMS and 4 protons from the mitochondrial matrix. The chain is Cytochrome c oxidase subunit 2 (COII) from Apis mellifera ligustica (Common honeybee).